A 695-amino-acid chain; its full sequence is DNA ligase (695 aa).

NAD(+)-binding positions include 44–48, 93–94, and glutamate 123; these read DAEYD and SL. Lysine 125 serves as the catalytic N6-AMP-lysine intermediate. NAD(+) contacts are provided by arginine 146, glutamate 184, lysine 300, and lysine 324. The Zn(2+) site is built by cysteine 418, cysteine 421, cysteine 436, and cysteine 442. The 90-residue stretch at 605-694 folds into the BRCT domain; the sequence is SAAKPLAGIT…PDAARSMAQR (90 aa).

This sequence belongs to the NAD-dependent DNA ligase family. LigA subfamily. The cofactor is Mg(2+). Requires Mn(2+) as cofactor.

The enzyme catalyses NAD(+) + (deoxyribonucleotide)n-3'-hydroxyl + 5'-phospho-(deoxyribonucleotide)m = (deoxyribonucleotide)n+m + AMP + beta-nicotinamide D-nucleotide.. Its function is as follows. DNA ligase that catalyzes the formation of phosphodiester linkages between 5'-phosphoryl and 3'-hydroxyl groups in double-stranded DNA using NAD as a coenzyme and as the energy source for the reaction. It is essential for DNA replication and repair of damaged DNA. This is DNA ligase from Acidothermus cellulolyticus (strain ATCC 43068 / DSM 8971 / 11B).